A 401-amino-acid polypeptide reads, in one-letter code: Beta-ketoadipyl-CoA thiolase (401 aa).

C90 acts as the Acyl-thioester intermediate in catalysis. Catalysis depends on proton acceptor residues H357 and C387.

It belongs to the thiolase-like superfamily. Thiolase family.

It catalyses the reaction succinyl-CoA + acetyl-CoA = 3-oxoadipyl-CoA + CoA. The protein operates within aromatic compound metabolism; phenylacetate degradation. In terms of biological role, catalyzes thiolytic cleavage of beta-ketoadipyl-CoA to succinyl-CoA and acetyl-CoA. The chain is Beta-ketoadipyl-CoA thiolase (paaJ) from Escherichia coli.